The primary structure comprises 390 residues: Chorismate synthase (390 aa).

Positions 39 and 45 each coordinate NADP(+). FMN-binding positions include 132–134, 253–254, G298, 313–317, and R339; these read RSS, NA, and KPIPT.

Belongs to the chorismate synthase family. As to quaternary structure, homotetramer. The cofactor is FMNH2.

The enzyme catalyses 5-O-(1-carboxyvinyl)-3-phosphoshikimate = chorismate + phosphate. It participates in metabolic intermediate biosynthesis; chorismate biosynthesis; chorismate from D-erythrose 4-phosphate and phosphoenolpyruvate: step 7/7. Catalyzes the anti-1,4-elimination of the C-3 phosphate and the C-6 proR hydrogen from 5-enolpyruvylshikimate-3-phosphate (EPSP) to yield chorismate, which is the branch point compound that serves as the starting substrate for the three terminal pathways of aromatic amino acid biosynthesis. This reaction introduces a second double bond into the aromatic ring system. The protein is Chorismate synthase of Bacillus licheniformis (strain ATCC 14580 / DSM 13 / JCM 2505 / CCUG 7422 / NBRC 12200 / NCIMB 9375 / NCTC 10341 / NRRL NRS-1264 / Gibson 46).